The chain runs to 298 residues: Probable endonuclease 4 (298 aa).

Zn(2+) contacts are provided by H69, H111, E146, D180, H183, H215, D228, H230, and E260.

Belongs to the AP endonuclease 2 family. It depends on Zn(2+) as a cofactor.

It carries out the reaction Endonucleolytic cleavage to 5'-phosphooligonucleotide end-products.. In terms of biological role, endonuclease IV plays a role in DNA repair. It cleaves phosphodiester bonds at apurinic or apyrimidinic (AP) sites, generating a 3'-hydroxyl group and a 5'-terminal sugar phosphate. The chain is Probable endonuclease 4 from Bacillus cereus (strain AH820).